A 662-amino-acid polypeptide reads, in one-letter code: Polyadenylate-binding protein 4 (662 aa).

Residues 1–23 (MAQVQAPSSHSPPPPAVVNDGAA) form a disordered region. 4 consecutive RRM domains span residues 46-124 (CSLY…YSSR), 134-211 (GNLF…PFLR), 225-302 (TNVY…KAQK), and 328-405 (LNLY…LAQR). Composition is skewed to low complexity over residues 480–489 (PMMQPGQQGP) and 506–518 (QQPM…QMMP). 2 disordered regions span residues 480–518 (PMMQ…QMMP) and 634–662 (NQPS…NDHL). The PABC domain occupies 558–635 (SAGQLATSLA…ALDVLRNVNQ (78 aa)). The segment covering 634 to 649 (NQPSSQGSEGNKSGSP) has biased composition (polar residues).

Belongs to the polyadenylate-binding protein type-1 family. In terms of assembly, interacts with ERD15/CID1. Interacts with Turnip mosaic virus (TuMV) VPg-Pro.

It is found in the cytoplasm. The protein localises to the nucleus. Its function is as follows. Binds the poly(A) tail of mRNA. Appears to be an important mediator of the multiple roles of the poly(A) tail in mRNA biogenesis, stability and translation. During infection with potyvirus TuMV, acts as a potential integral component of the viral replicase complex that could play an important role in the regulation of potyviral RNA-dependent RNA polymerase (RdRp). The protein is Polyadenylate-binding protein 4 (PAB4) of Arabidopsis thaliana (Mouse-ear cress).